A 414-amino-acid polypeptide reads, in one-letter code: Putative cytochrome P450 126 (414 aa).

Cys-363 provides a ligand contact to heme.

This sequence belongs to the cytochrome P450 family. Requires heme as cofactor.

This Mycobacterium tuberculosis (strain CDC 1551 / Oshkosh) protein is Putative cytochrome P450 126 (cyp126).